A 432-amino-acid chain; its full sequence is Peptidase B (432 aa).

Mn(2+) is bound by residues Lys196 and Asp201. Lys208 is an active-site residue. Mn(2+) contacts are provided by Asp219, Asp278, and Glu280. Arg282 is an active-site residue.

The protein belongs to the peptidase M17 family. In terms of assembly, homohexamer. It depends on Mn(2+) as a cofactor.

It is found in the cytoplasm. It carries out the reaction Release of an N-terminal amino acid, Xaa, from a peptide or arylamide. Xaa is preferably Glu or Asp but may be other amino acids, including Leu, Met, His, Cys and Gln.. Probably plays an important role in intracellular peptide degradation. The chain is Peptidase B from Yersinia pestis bv. Antiqua (strain Antiqua).